The chain runs to 126 residues: Small ribosomal subunit protein eS8 (126 aa).

The segment covering 1 to 10 has biased composition (polar residues); it reads MAIWQGSSLR. Residues 1 to 35 form a disordered region; it reads MAIWQGSSLRKPSGARSRRNKNKRNAEFGRNPAET.

It belongs to the eukaryotic ribosomal protein eS8 family. Part of the 30S ribosomal subunit.

The chain is Small ribosomal subunit protein eS8 from Methanosphaera stadtmanae (strain ATCC 43021 / DSM 3091 / JCM 11832 / MCB-3).